The sequence spans 425 residues: MADKEAAFDDAVEERVINEEHKIWKKNTPFLYDLVMTHALEWPSLTAQWLPDVTRPEGKDFSIHRLVLGTHTSDEQNHLVIASVQLPNDDAQFDASHYDSEKGEFGGFGSVSGKIEIEIKINHEGEVNRARYMPQNPCIIATKTPSSDVLVFDYTKHPSKPDPSGECNPDLRLRGHQKEGYGLSWNPNLSGHLLSASDDHTICLWDISAVPKEGKVVDAKTIFTGHTAVVEDVSWHLLHESLFGSVADDQKLMIWDTRSNNTSKPSHSVDAHTAEVNCLSFNPYSEFILATGSADKTVALWDLRNLKLKLHSFESHKDEIFQVQWSPHNETILASSGTDRRLNVWDLSKIGEEQSPEDAEDGPPELLFIHGGHTAKISDFSWNPNEPWVICSVSEDNIMQVWQMAENIYNDEDPEGSVDPEGQGS.

Position 2 is an N-acetylalanine (Ala2). Lys4 bears the N6-acetyllysine; alternate mark. Residue Lys4 forms a Glycyl lysine isopeptide (Lys-Gly) (interchain with G-Cter in SUMO2); alternate linkage. Residue Lys4 forms a Glycyl lysine isopeptide (Lys-Gly) (interchain with G-Cter in ubiquitin); alternate linkage. WD repeat units lie at residues 32-125 (YDLV…NHEG), 126-175 (EVNR…RLRG), 176-223 (HQKE…KTIF), 225-270 (GHTA…HSVD), 271-314 (AHTA…HSFE), 315-371 (SHKD…FIHG), and 372-404 (GHTA…VWQM). At Ser110 the chain carries Phosphoserine. Lys160 is subject to N6-acetyllysine; alternate. A Glycyl lysine isopeptide (Lys-Gly) (interchain with G-Cter in SUMO2); alternate cross-link involves residue Lys160. At Ser355 the chain carries Phosphoserine.

The protein belongs to the WD repeat RBAP46/RBAP48/MSI1 family. As to quaternary structure, binds directly to helix 1 of the histone fold of histone H4, a region that is not accessible when H4 is in chromatin. Subunit of the chromatin assembly factor 1 (CAF-1) complex, which is composed of RBBP4, CHAF1B and CHAF1A. Subunit of the core histone deacetylase (HDAC) complex, which is composed of HDAC1, HDAC2, RBBP4 and RBBP7. The core HDAC complex associates with SIN3A, ARID4B/SAP180, SAP18, SAP30, SAP130, SUDS3/SAP45 and possibly ARID4A/RBP1 and ING1 to form the SIN3 HDAC complex. Component of the nucleosome remodeling and deacetylase (NuRD) repressor complex, composed of core proteins MTA1, MTA2, MTA3, RBBP4, RBBP7, HDAC1, HDAC2, MBD2, MBD3, and peripherally associated proteins CDK2AP1, CDK2AP2, GATAD2A, GATAD2B, CHD3, CHD4 and CHD5. The exact stoichiometry of the NuRD complex is unknown, and some subunits such as MBD2 and MBD3, GATAD2A and GATAD2B, and CHD3, CHD4 and CHD5 define mutually exclusive NuRD complexes. Interacts with ZNF512B; the interaction is direct and may play a role in repressing gene expression. The NuRD complex may also interact with MBD3L1 and MBD3L2. Component of the PRC2 complex, which consists of the core subunits EED, EZH1 or EZH2, SUZ12, and RBBP4, and various combinations of accessory subunits including AEBP2, JARID2, PHF19, MTF2 and EPOP. Forms a monomeric PRC2.2 (class 2) complex consisting of at least SUZ12, RBBP4, AEBP2 and JARID2. Forms a dimeric PRC2.1 (class 1, PRC-PCL) complex consisting of at least SUZ12, RBBP4, and PHF19; PHF19 stabilizes the dimeric structure which enhances PRC2 interaction with chromatin. Component of the NURF-1 ISWI chromatin remodeling complex (also called the nucleosome-remodeling factor (NURF) complex) at least composed of SMARCA1 (isoform 2), BPTF, RBBP4 and RBBP7. Within the complex interacts with isoform 2 of SMARCA1. Component of the BPFT-SMARCA1 complex at least composed of SMARCA1 (isoform 1), BPFT, RBBP4 and RBBP7; the complex is catalytically inactive and does not remodel chromatin. Within the complex interacts with isoform 1 of SMARCA1. Interacts with the ISWI chromatin remodeling complex component SMARCA5; the interaction is direct. Interacts with the viral protein-binding domain of the retinoblastoma protein (RB1). Component of the DREAM complex (also named LINC complex) at least composed of E2F4, E2F5, LIN9, LIN37, LIN52, LIN54, MYBL1, MYBL2, RBL1, RBL2, RBBP4, TFDP1 and TFDP2. The complex exists in quiescent cells where it represses cell cycle-dependent genes. It dissociates in S phase when LIN9, LIN37, LIN52 and LIN54 form a subcomplex that binds to MYBL2. Found in a complex composed of at least SINHCAF, SIN3A, HDAC1, SAP30, RBBP4, OGT and TET1. Interacts with ZNF827; the interaction is direct and recruits RBBP4 to telomeres. Interacts with MTA1; the interaction is direct and mutually exclusive with binding histone H4. Interacts with ARMC12 (via ARM domains). Interacts with BRCA1. Interacts with CDK2AP1. Interacts with CREBBP, and this interaction may be enhanced by the binding of phosphorylated CREB1 to CREBBP. Interacts with ERCC6. Interacts with HDAC7. Interacts with PHF6. Interacts with PWWP2B. Interacts with SPEN/MINT. Interacts with SUV39H1.

It is found in the nucleus. It localises to the chromosome. The protein localises to the telomere. Functionally, core histone-binding subunit that may target chromatin assembly factors, chromatin remodeling factors and histone deacetylases to their histone substrates in a manner that is regulated by nucleosomal DNA. Component of the chromatin assembly factor 1 (CAF-1) complex, which is required for chromatin assembly following DNA replication and DNA repair. Component of the core histone deacetylase (HDAC) complex, which promotes histone deacetylation and consequent transcriptional repression. Component of the nucleosome remodeling and histone deacetylase complex (the NuRD complex), which promotes transcriptional repression by histone deacetylation and nucleosome remodeling. Component of the PRC2 complex, which promotes repression of homeotic genes during development. Component of the NURF (nucleosome remodeling factor) complex. The protein is Histone-binding protein RBBP4 (RBBP4) of Pongo abelii (Sumatran orangutan).